The following is a 206-amino-acid chain: Orotate phosphoribosyltransferase (206 aa).

5-phospho-alpha-D-ribose 1-diphosphate contacts are provided by residues lysine 26, 72–73 (YK), arginine 99, lysine 100, lysine 103, histidine 105, and 124–132 (DDVMTSGFS). Orotate is bound by residues threonine 128 and arginine 157.

This sequence belongs to the purine/pyrimidine phosphoribosyltransferase family. PyrE subfamily. Homodimer. Mg(2+) serves as cofactor.

It catalyses the reaction orotidine 5'-phosphate + diphosphate = orotate + 5-phospho-alpha-D-ribose 1-diphosphate. The protein operates within pyrimidine metabolism; UMP biosynthesis via de novo pathway; UMP from orotate: step 1/2. Catalyzes the transfer of a ribosyl phosphate group from 5-phosphoribose 1-diphosphate to orotate, leading to the formation of orotidine monophosphate (OMP). The sequence is that of Orotate phosphoribosyltransferase from Buchnera aphidicola subsp. Baizongia pistaciae (strain Bp).